The primary structure comprises 530 residues: Dual specificity calcium/calmodulin-dependent 3',5'-cyclic nucleotide phosphodiesterase 1A (530 aa).

Calmodulin-binding regions lie at residues 24-44 (TEKM…QLEK) and 114-137 (EKPR…MYRK). Residues 142–508 (VGLAYPEAVI…ERWKELAAQG (367 aa)) form the PDEase domain. The active-site Proton donor is the His219. 4 residues coordinate Zn(2+): His223, His259, Asp260, and Asp366. Position 260 (Asp260) interacts with Mg(2+). Disordered stretches follow at residues 450-471 (TKTP…NDGT) and 502-530 (KELA…ETHS). Positions 451–471 (KTPSYGASRRSNMKGTTNDGT) are enriched in polar residues. The span at 510–530 (PDPHKNSDLVNAEEKHAETHS) shows a compositional bias: basic and acidic residues.

Belongs to the cyclic nucleotide phosphodiesterase family. PDE1 subfamily. As to quaternary structure, homodimer. Interacts with YWHAZ. It depends on Zn(2+) as a cofactor. Requires Mg(2+) as cofactor.

It carries out the reaction a nucleoside 3',5'-cyclic phosphate + H2O = a nucleoside 5'-phosphate + H(+). It catalyses the reaction 3',5'-cyclic GMP + H2O = GMP + H(+). The catalysed reaction is 3',5'-cyclic AMP + H2O = AMP + H(+). Its activity is regulated as follows. Type I PDE are activated by the binding of calmodulin in the presence of Ca(2+). In terms of biological role, calcium/calmodulin-dependent cyclic nucleotide phosphodiesterase with a dual specificity for the second messengers cGMP and cAMP, which are key regulators of many important physiological processes. Has a higher efficiency with cGMP compared to cAMP. The polypeptide is Dual specificity calcium/calmodulin-dependent 3',5'-cyclic nucleotide phosphodiesterase 1A (Bos taurus (Bovine)).